Here is a 576-residue protein sequence, read N- to C-terminus: MQSNGTGQEQNHPANTQNGDANGLQSNAGSASGASGTGSGSLKKKKRLSQAEEDVIRLIGQHLHGLGLNQTVDLLMQESGCRLEHSSATKFRNHVMEGEWDKAENDLNELKALMHSPNAIVRMKFLLLQQKYLEYLEDGKVLEALQVLRGELTPLKYNTDRIHVLSGYLMCSHAEDLKAKAEWEGKGAGSRCRLLDKLQTYLPPSVMLPPRRLQTLLRQAVELQRDRCLYHNTKLDSSLDSVSLLLDHVCSRKQFPCYTQQILTEHCNEVWFCKFSNDGTKLATGSKDTTVIIWQVEPDTHQLKLLRTLEGHAYGVSYLAWSPDDVYLIACGPDDCSELWLWNVQTGELRTKMSQSHEDSLTSVAWNPDGKRFVTGGQRGQFYQCDLDGNLLESWEGVRVQCLWCMGDGRTVLASDTHQRIRGYSFEDLTDRNIVQEDHPIMSFTVSKNGRLALLNVATQGVHLWDLQDRVLVRKYQGVTQGFYTIHSCFGGHNEDFIASGSEDHKVYIWHKRSELPIVELTGHTRTVNCVSWNPCIPSLMASASDDGTVRIWGPAPFLDAQELDGLTESCSSMDS.

Positions 1–20 (MQSNGTGQEQNHPANTQNGD) are enriched in polar residues. The tract at residues 1-46 (MQSNGTGQEQNHPANTQNGDANGLQSNAGSASGASGTGSGSLKKKK) is disordered. Over residues 21 to 34 (ANGLQSNAGSASGA) the composition is skewed to low complexity. Phosphoserine is present on Ser49. One can recognise a LisH domain in the interval 51 to 83 (AEEDVIRLIGQHLHGLGLNQTVDLLMQESGCRL). The region spanning 84–143 (EHSSATKFRNHVMEGEWDKAENDLNELKALMHSPNAIVRMKFLLLQQKYLEYLEDGKVLE) is the CTLH domain. 6 WD repeats span residues 265 to 304 (EHCNEVWFCKFSNDGTKLATGSKDTTVIIWQVEPDTHQLK), 311 to 350 (GHAYGVSYLAWSPDDVYLIACGPDDCSELWLWNVQTGELR), 356 to 396 (SHED…ESWE), 436 to 475 (QEDHPIMSFTVSKNGRLALLNVATQGVHLWDLQDRVLVRK), 478 to 520 (GVTQ…PIVE), and 523 to 563 (GHTR…DAQE).

As to quaternary structure, forms homooligomers. Identified in the CTLH complex that contains at least MAEA, RMND5A (or alternatively its paralog RMND5B), GID8, WDR26, and RANBP9 and/or RANBP10. Interacts with DDB1-CUL4A/B E3 ligase complexes.

The protein resides in the cytoplasm. It localises to the nucleus. Its subcellular location is the mitochondrion. Its function is as follows. G-beta-like protein involved in cell signal transduction. Acts as a negative regulator in MAPK signaling pathway. Functions as a scaffolding protein to promote G beta:gamma-mediated PLCB2 plasma membrane translocation and subsequent activation in leukocytes. Core component of the CTLH E3 ubiquitin-protein ligase complex that mediates ubiquitination and subsequent proteasomal degradation of target proteins. Acts as a negative regulator of the canonical Wnt signaling pathway through preventing ubiquitination of beta-catenin CTNNB1 by the beta-catenin destruction complex, thus negatively regulating CTNNB1 degradation. Serves as a scaffold to coordinate PI3K/AKT pathway-driven cell growth and migration. Protects cells from oxidative stress-induced apoptosis via the down-regulation of AP-1 transcriptional activity as well as by inhibiting cytochrome c release from mitochondria. Also protects cells by promoting hypoxia-mediated autophagy and mitophagy. The sequence is that of WD repeat-containing protein 26 (wdr26) from Danio rerio (Zebrafish).